The following is a 1113-amino-acid chain: Cytospin-A (1113 aa).

The segment at 1–160 (MKKSVRPAAS…KSKSDGQISD (160 aa)) is disordered. Residues 59–103 (ASCNAVSKSKRTTSVGTTASTLDSKPKTASGTTSKRLASSLSKET) show a composition bias toward polar residues. Residues 145–154 (SEGRMSKSKS) are compositionally biased toward basic and acidic residues. A coiled-coil region spans residues 220-259 (AADVESTLILLQEQNQAIREELNLLKSENRMLKDRLNALG). Residues 284 to 374 (AGSGQSDGGG…RRGSSGNASE (91 aa)) form a disordered region. Low complexity predominate over residues 338–358 (SSDDALDAPSGASSSSESECA). 2 coiled-coil regions span residues 379-433 (CLTE…MDSL) and 473-791 (MELE…RGRV). Disordered regions lie at residues 766–785 (QEKN…RKQD), 832–902 (FDSA…PTYP), 914–957 (GSAA…DGAS), and 972–997 (ALAS…RKDP). Residues 834-845 (SASQGPPSSGAS) show a composition bias toward low complexity. Positions 856-867 (PRTPLSPSPMKT) are enriched in pro residues. The segment covering 925–940 (QRVSNMDSTKAISVSR) has biased composition (polar residues). Positions 941 to 951 (RSSEEMKRDMA) are enriched in basic and acidic residues. Positions 972–981 (ALASSSPTAS) are enriched in low complexity. A Calponin-homology (CH) domain is found at 1007 to 1112 (GSKRNALLKW…YVTAIYKYFE (106 aa)).

Belongs to the cytospin-A family. As to quaternary structure, may interact with both microtubules and actin cytoskeleton.

It is found in the cytoplasm. Its subcellular location is the cytoskeleton. The protein resides in the spindle. The protein localises to the cell junction. It localises to the gap junction. Involved in cytokinesis and spindle organization. May play a role in actin cytoskeleton organization and microtubule stabilization and hence required for proper cell adhesion and migration. The sequence is that of Cytospin-A (specc1l) from Tetraodon nigroviridis (Spotted green pufferfish).